The sequence spans 132 residues: Small ribosomal subunit protein uS8 (132 aa).

This sequence belongs to the universal ribosomal protein uS8 family. Part of the 30S ribosomal subunit. Contacts proteins S5 and S12.

Its function is as follows. One of the primary rRNA binding proteins, it binds directly to 16S rRNA central domain where it helps coordinate assembly of the platform of the 30S subunit. The chain is Small ribosomal subunit protein uS8 from Latilactobacillus sakei subsp. sakei (strain 23K) (Lactobacillus sakei subsp. sakei).